Here is an 803-residue protein sequence, read N- to C-terminus: Bifunctional enzyme MurC/Ddl (803 aa).

The tract at residues 1 to 446 is UDP-N-acetylmuramate--alanine ligase; sequence MMKSLFYHFI…GEKLRDFEPQ (446 aa). ATP is bound by residues 111–117 and 600–655; these read GSHGKTT and VEAF…CKEI. The tract at residues 447–803 is D-alanine--D-alanine ligase; it reads KLHLGIICGG…SFVDQAFAIQ (357 aa). Residues 567–778 form the ATP-grasp domain; it reads KRFMSDLGIP…YEQIVHQLVI (212 aa). The Mg(2+) site is built by D732, E745, and N747.

The protein in the N-terminal section; belongs to the MurCDEF family. In the C-terminal section; belongs to the D-alanine--D-alanine ligase family. Mg(2+) serves as cofactor. The cofactor is Mn(2+).

Its subcellular location is the cytoplasm. The catalysed reaction is UDP-N-acetyl-alpha-D-muramate + L-alanine + ATP = UDP-N-acetyl-alpha-D-muramoyl-L-alanine + ADP + phosphate + H(+). It carries out the reaction 2 D-alanine + ATP = D-alanyl-D-alanine + ADP + phosphate + H(+). The protein operates within cell wall biogenesis; peptidoglycan biosynthesis. Functionally, cell wall formation. The polypeptide is Bifunctional enzyme MurC/Ddl (murC/ddl) (Chlamydia trachomatis serovar D (strain ATCC VR-885 / DSM 19411 / UW-3/Cx)).